We begin with the raw amino-acid sequence, 122 residues long: Small ribosomal subunit protein uS13 (122 aa).

Residues 94–122 (SLPVRGQRTKTNARTRKVHVSRSKNSRGK) are disordered.

It belongs to the universal ribosomal protein uS13 family. Part of the 30S ribosomal subunit. Forms a loose heterodimer with protein S19. Forms two bridges to the 50S subunit in the 70S ribosome.

Functionally, located at the top of the head of the 30S subunit, it contacts several helices of the 16S rRNA. In the 70S ribosome it contacts the 23S rRNA (bridge B1a) and protein L5 of the 50S subunit (bridge B1b), connecting the 2 subunits; these bridges are implicated in subunit movement. Contacts the tRNAs in the A and P-sites. This is Small ribosomal subunit protein uS13 from Haemophilus influenzae (strain ATCC 51907 / DSM 11121 / KW20 / Rd).